The following is a 951-amino-acid chain: AP-1 complex subunit beta-1 (951 aa).

Lys-318 carries the post-translational modification N6-acetyllysine. Tyr-574 is subject to 3'-nitrotyrosine.

This sequence belongs to the adaptor complexes large subunit family. Adaptor protein complex 1 (AP-1) is a heterotetramer composed of two large adaptins (gamma-type subunit AP1G1 and beta-type subunit AP1B1), a medium adaptin (mu-type subunit AP1M1 or AP1M2) and a small adaptin (sigma-type subunit AP1S1 or AP1S2 or AP1S3).

The protein resides in the cytoplasmic vesicle. Its subcellular location is the clathrin-coated vesicle membrane. It is found in the golgi apparatus. Its function is as follows. Subunit of clathrin-associated adaptor protein complex 1 that plays a role in protein sorting in the late-Golgi/trans-Golgi network (TGN) and/or endosomes. The AP complexes mediate both the recruitment of clathrin to membranes and the recognition of sorting signals within the cytosolic tails of transmembrane cargo molecules. This is AP-1 complex subunit beta-1 (AP2B1) from Bos taurus (Bovine).